The sequence spans 265 residues: Probable cell division protein kinase ECU08_0230 (265 aa).

The 260-residue stretch at 4–263 folds into the Protein kinase domain; it reads YILGALIGSG…IMEILENEYG (260 aa). ATP contacts are provided by residues 10–18 and Lys33; that span reads IGSGTYGEV. Asp121 functions as the Proton acceptor in the catalytic mechanism.

The protein belongs to the protein kinase superfamily. CMGC Ser/Thr protein kinase family. CDC2/CDKX subfamily.

It localises to the nucleus. The enzyme catalyses L-seryl-[protein] + ATP = O-phospho-L-seryl-[protein] + ADP + H(+). It carries out the reaction L-threonyl-[protein] + ATP = O-phospho-L-threonyl-[protein] + ADP + H(+). Functionally, may play a role in the control of the eukaryotic cell cycle. This chain is Probable cell division protein kinase ECU08_0230, found in Encephalitozoon cuniculi (strain GB-M1) (Microsporidian parasite).